The primary structure comprises 194 residues: uncharacterized protein (194 aa).

Positions 1–15 are cleaved as a signal peptide; the sequence is MFVLSIALLSCTTLC. One can recognise a PAN domain in the interval 49 to 134; it reads CPQGLHADAI…KATYYEKIRC (86 aa). Cystine bridges form between Cys49–Cys134 and Cys79–Cys106.

This is an uncharacterized protein from Caenorhabditis elegans.